A 322-amino-acid polypeptide reads, in one-letter code: Pre-mRNA-splicing factor NTR2 (322 aa).

Positions 1–30 (MAIKKRNKIRLPSGSPEEVGIDGSAHKPMQ) are disordered. Position 40 is a phosphoserine (serine 40). Residues 113 to 137 (LLSDSSEAGSSSEGEHISSIPTRGE) are disordered. The span at 115–132 (SDSSEAGSSSEGEHISSI) shows a compositional bias: low complexity. 2 positions are modified to phosphoserine: serine 153 and serine 197.

In terms of assembly, component of the NTR complex (NTC-related complex), composed of NTR1, NTR2 and PRP43. Interacts with CLF1, NTR1 and PRP43.

The protein localises to the cytoplasm. The protein resides in the nucleus. Involved in pre-mRNA splicing and spliceosome disassembly. Promotes release of excised lariat intron from the spliceosome by acting as a receptor for PRP43. This targeting of PRP43 leads to disassembly of the spliceosome with the separation of the U2, U5, U6 snRNPs and the NTC complex. This chain is Pre-mRNA-splicing factor NTR2 (NTR2), found in Saccharomyces cerevisiae (strain ATCC 204508 / S288c) (Baker's yeast).